A 575-amino-acid polypeptide reads, in one-letter code: FAD-dependent monooxygenase rstn6 (575 aa).

The N-terminal stretch at 1–17 is a signal peptide; sequence MYDVIVIGAGWCGLVAA. An FAD-binding site is contributed by isoleucine 106. Residues asparagine 239 and asparagine 295 are each glycosylated (N-linked (GlcNAc...) asparagine).

Belongs to the FAD-binding monooxygenase family. Requires FAD as cofactor.

The protein operates within antifungal biosynthesis. In terms of biological role, FAD-dependent monooxygenase; part of the gene cluster that mediates the biosynthesis of the tetrahydropyranyl antifungal agent restricticin that acts as an inhibitor of CYP51 and blocks the ergosterol biosynthesis. The highly reducing polyketide synthase rstn3, the short chain dehydrogenase rstn4, the cyclase rstn5, the FAD-dependent monooxygenase rstn6 and the enoylreductase rstn7 are required to generate the first stable intermediate desmethylrestrictinol. Rstn3 with rstn7 biosynthesize the first polyketide chain intermediate that is reduced by rstn4, followed by epoxidation by rstn6 before 6-endo cyclization via epoxide opening by rstn5 leads to desmethylrestrictinol. The methyltransferase rstn1 then catalyzes the C4 O-methylation of desmethylrestrictinol to produce restrictinol, and the nonribosomal peptide synthetase rstn8 catalyzes the C3 esterification of restrictinol with glycine that leads to restricticin. The polypeptide is FAD-dependent monooxygenase rstn6 (Aspergillus nomiae NRRL (strain ATCC 15546 / NRRL 13137 / CBS 260.88 / M93)).